We begin with the raw amino-acid sequence, 513 residues long: Bone morphogenetic protein 6 (513 aa).

The N-terminal stretch at 1–20 (MPGLGRRAQWLCWWWGLLCS) is a signal peptide. Positions 21–374 (CCGPPPLRPP…VSEVHVRTTR (354 aa)) are excised as a propeptide. 3 disordered regions span residues 38-66 (AAGG…SSGF), 89-131 (LPHR…RLKS), and 145-200 (ADND…ASPL). The segment covering 98 to 121 (GLQQPQPPALRQQEEQQQQQQLPR) has biased composition (low complexity). A compositionally biased stretch (polar residues) spans 158–172 (QQSWPHEAASSSQRR). Residues Asn241, Asn269, Asn386, Asn404, and Asn454 are each glycosylated (N-linked (GlcNAc...) asparagine). Residues 373–398 (TRSASSRRRQQSRNRSTQSQDVARVS) are disordered. Disulfide bonds link Cys412–Cys478, Cys441–Cys510, and Cys445–Cys512.

It belongs to the TGF-beta family. As to quaternary structure, interacts with SOSTDC1. Interacts (when glycosylated) with type I receptor ACVR1; the interaction may induce HAMP expression. Interacts with type II receptor ACVR2B. Interacts with Hemojuvelin/HJV. Interacts with ERFE; the interaction inhibits BMP-induced transcription of HAMP. Interacts with BMPR1A/ALK3. Forms heterodimers with BMP2 in vitro; the heterodimer then binds to its receptor BMPR1A /ALK3 and may induce HAMP expression. Post-translationally, glycosylated at Asn-454. Glycosylation is crucial for recognition by the activin receptor type I/ACVR1.

The protein localises to the secreted. Its function is as follows. Growth factor of the TGF-beta superfamily that plays essential roles in many developmental processes including cartilage and bone formation. Also plays an important role in the regulation of HAMP/hepcidin expression and iron metabolism by acting as a ligand for hemojuvelin/HJV. Also acts to promote expression of HAMP, potentially via the interaction with its receptor BMPR1A/ALK3. Initiates the canonical BMP signaling cascade by associating with type I receptor ACVR1 and type II receptor ACVR2B. In turn, ACVR1 propagates signal by phosphorylating SMAD1/5/8 that travel to the nucleus and act as activators and repressors of transcription of target. Can also signal through non-canonical pathway such as TAZ-Hippo signaling cascade to modulate VEGF signaling by regulating VEGFR2 expression. The sequence is that of Bone morphogenetic protein 6 (BMP6) from Homo sapiens (Human).